The chain runs to 370 residues: 3-dehydroquinate synthase (370 aa).

Residues 108–112, 132–133, K145, and K154 each bind NAD(+); these read GVVGD and TT. The Zn(2+) site is built by E187, H250, and H268.

Belongs to the sugar phosphate cyclases superfamily. Dehydroquinate synthase family. The cofactor is Co(2+). Zn(2+) serves as cofactor. Requires NAD(+) as cofactor.

Its subcellular location is the cytoplasm. The enzyme catalyses 7-phospho-2-dehydro-3-deoxy-D-arabino-heptonate = 3-dehydroquinate + phosphate. It functions in the pathway metabolic intermediate biosynthesis; chorismate biosynthesis; chorismate from D-erythrose 4-phosphate and phosphoenolpyruvate: step 2/7. Its function is as follows. Catalyzes the conversion of 3-deoxy-D-arabino-heptulosonate 7-phosphate (DAHP) to dehydroquinate (DHQ). This Caulobacter vibrioides (strain NA1000 / CB15N) (Caulobacter crescentus) protein is 3-dehydroquinate synthase.